The sequence spans 553 residues: Hydroxylamine reductase (553 aa).

C3, C6, C15, and C21 together coordinate [4Fe-4S] cluster. Residues H244, E268, C312, C406, C434, C459, E494, and K496 each contribute to the hybrid [4Fe-2O-2S] cluster site. The residue at position 406 (C406) is a Cysteine persulfide.

This sequence belongs to the HCP family. Monomer. Requires [4Fe-4S] cluster as cofactor. Hybrid [4Fe-2O-2S] cluster is required as a cofactor.

The protein localises to the cytoplasm. The enzyme catalyses A + NH4(+) + H2O = hydroxylamine + AH2 + H(+). In terms of biological role, catalyzes the reduction of hydroxylamine to form NH(3) and H(2)O. The chain is Hydroxylamine reductase from Nitratidesulfovibrio vulgaris (strain ATCC 29579 / DSM 644 / CCUG 34227 / NCIMB 8303 / VKM B-1760 / Hildenborough) (Desulfovibrio vulgaris).